The following is a 575-amino-acid chain: Putative export ATP-binding/permease protein RBE_0492 (575 aa).

Residues L20–L303 form the ABC transmembrane type-1 domain. Transmembrane regions (helical) follow at residues I21–F41, I61–F81, F135–F155, F158–F178, A242–I262, and I277–L297. The ABC transporter domain maps to L336 to E571. Residue G371 to S378 coordinates ATP.

It belongs to the ABC transporter superfamily. Homodimer.

It is found in the cell inner membrane. In terms of biological role, part of an ABC transporter complex. Transmembrane domains (TMD) form a pore in the inner membrane and the ATP-binding domain (NBD) is responsible for energy generation. The protein is Putative export ATP-binding/permease protein RBE_0492 of Rickettsia bellii (strain RML369-C).